We begin with the raw amino-acid sequence, 91 residues long: YcgL domain-containing protein Ent638_2370 (91 aa).

One can recognise a YcgL domain in the interval 1–85; it reads MFCVIYRSAK…PPENLLKQHL (85 aa).

This Enterobacter sp. (strain 638) protein is YcgL domain-containing protein Ent638_2370.